Consider the following 482-residue polypeptide: Glutamate--tRNA ligase 2 (482 aa).

Positions 16-26 match the 'HIGH' region motif; sequence PSPTGYLHLGN. Cys113, Cys115, Cys140, and His142 together coordinate Zn(2+). Positions 257 to 261 match the 'KMSKS' region motif; the sequence is PLSKR. Lys260 lines the ATP pocket.

Belongs to the class-I aminoacyl-tRNA synthetase family. Glutamate--tRNA ligase type 1 subfamily. In terms of assembly, monomer. It depends on Zn(2+) as a cofactor.

Its subcellular location is the cytoplasm. It catalyses the reaction tRNA(Glu) + L-glutamate + ATP = L-glutamyl-tRNA(Glu) + AMP + diphosphate. Its function is as follows. Catalyzes the attachment of glutamate to tRNA(Glu) in a two-step reaction: glutamate is first activated by ATP to form Glu-AMP and then transferred to the acceptor end of tRNA(Glu). This chain is Glutamate--tRNA ligase 2, found in Acidithiobacillus ferrooxidans (strain ATCC 53993 / BNL-5-31) (Leptospirillum ferrooxidans (ATCC 53993)).